Consider the following 223-residue polypeptide: Small ribosomal subunit protein uS3 (223 aa).

Residues I39 to K108 enclose the KH type-2 domain.

It belongs to the universal ribosomal protein uS3 family. As to quaternary structure, part of the 30S ribosomal subunit. Forms a tight complex with proteins S10 and S14.

Binds the lower part of the 30S subunit head. Binds mRNA in the 70S ribosome, positioning it for translation. The protein is Small ribosomal subunit protein uS3 of Clostridium botulinum (strain Hall / ATCC 3502 / NCTC 13319 / Type A).